The primary structure comprises 363 residues: Flagellar P-ring protein (363 aa).

An N-terminal signal peptide occupies residues 1-21 (MKTVINIFILFTFLASLSANA).

Belongs to the FlgI family. The basal body constitutes a major portion of the flagellar organelle and consists of four rings (L,P,S, and M) mounted on a central rod.

Its subcellular location is the periplasm. It localises to the bacterial flagellum basal body. Assembles around the rod to form the L-ring and probably protects the motor/basal body from shearing forces during rotation. This Colwellia psychrerythraea (strain 34H / ATCC BAA-681) (Vibrio psychroerythus) protein is Flagellar P-ring protein.